Here is a 903-residue protein sequence, read N- to C-terminus: Valine--tRNA ligase (903 aa).

Polar residues predominate over residues 1-15 (MVCVTDQNNETTSQN). Residues 1 to 21 (MVCVTDQNNETTSQNRADKLP) are disordered. A 'HIGH' region motif is present at residues 61–71 (PNVTGQLHMGH). A 'KMSKS' region motif is present at residues 552-556 (KMSKS). Residue K555 participates in ATP binding. Residues 836–903 (TVDVAAERKR…RINKRLEELA (68 aa)) are a coiled coil.

Belongs to the class-I aminoacyl-tRNA synthetase family. ValS type 1 subfamily. In terms of assembly, monomer.

The protein localises to the cytoplasm. It catalyses the reaction tRNA(Val) + L-valine + ATP = L-valyl-tRNA(Val) + AMP + diphosphate. Functionally, catalyzes the attachment of valine to tRNA(Val). As ValRS can inadvertently accommodate and process structurally similar amino acids such as threonine, to avoid such errors, it has a 'posttransfer' editing activity that hydrolyzes mischarged Thr-tRNA(Val) in a tRNA-dependent manner. The protein is Valine--tRNA ligase of Corynebacterium glutamicum (strain ATCC 13032 / DSM 20300 / JCM 1318 / BCRC 11384 / CCUG 27702 / LMG 3730 / NBRC 12168 / NCIMB 10025 / NRRL B-2784 / 534).